Consider the following 184-residue polypeptide: 3-hydroxyanthranilate 3,4-dioxygenase (184 aa).

An O2-binding site is contributed by Arg-44. Fe cation is bound by residues His-48, Glu-54, and His-92. Substrate is bound at residue Glu-54. Positions 96 and 106 each coordinate substrate. 4 residues coordinate a divalent metal cation: Cys-121, Cys-126, Cys-162, and Cys-165.

This sequence belongs to the 3-HAO family. Fe(2+) is required as a cofactor.

The protein resides in the cytoplasm. It catalyses the reaction 3-hydroxyanthranilate + O2 = (2Z,4Z)-2-amino-3-carboxymuconate 6-semialdehyde. It participates in cofactor biosynthesis; NAD(+) biosynthesis; quinolinate from L-kynurenine: step 3/3. In terms of biological role, catalyzes the oxidative ring opening of 3-hydroxyanthranilate to 2-amino-3-carboxymuconate semialdehyde, which spontaneously cyclizes to quinolinate. The protein is 3-hydroxyanthranilate 3,4-dioxygenase of Pyricularia oryzae (strain 70-15 / ATCC MYA-4617 / FGSC 8958) (Rice blast fungus).